The following is a 272-amino-acid chain: 3-methyl-2-oxobutanoate hydroxymethyltransferase (272 aa).

Residues Asp-42 and Asp-86 each coordinate Mg(2+). 3-methyl-2-oxobutanoate-binding positions include 42 to 43, Asp-86, and Lys-116; that span reads DS. Glu-118 is a binding site for Mg(2+). Glu-185 serves as the catalytic Proton acceptor.

This sequence belongs to the PanB family. Homodecamer; pentamer of dimers. Mg(2+) is required as a cofactor.

The protein resides in the cytoplasm. The catalysed reaction is 3-methyl-2-oxobutanoate + (6R)-5,10-methylene-5,6,7,8-tetrahydrofolate + H2O = 2-dehydropantoate + (6S)-5,6,7,8-tetrahydrofolate. It functions in the pathway cofactor biosynthesis; (R)-pantothenate biosynthesis; (R)-pantoate from 3-methyl-2-oxobutanoate: step 1/2. Catalyzes the reversible reaction in which hydroxymethyl group from 5,10-methylenetetrahydrofolate is transferred onto alpha-ketoisovalerate to form ketopantoate. This Prochlorococcus marinus (strain MIT 9313) protein is 3-methyl-2-oxobutanoate hydroxymethyltransferase.